The chain runs to 391 residues: Probable acridone synthase 4 (391 aa).

The active site involves C164.

Belongs to the thiolase-like superfamily. Chalcone/stilbene synthases family.

It catalyses the reaction N-methylanthraniloyl-CoA + 3 malonyl-CoA + 3 H(+) = 1,3-dihydroxy-N-methylacridone + 3 CO2 + 4 CoA + H2O. The chain is Probable acridone synthase 4 (ACS4) from Ruta graveolens (Common rue).